The primary structure comprises 630 residues: 1-deoxy-D-xylulose-5-phosphate synthase (630 aa).

Thiamine diphosphate-binding positions include His-72 and 113-115 (GHS). Asp-144 lines the Mg(2+) pocket. Thiamine diphosphate is bound by residues 145–146 (GA), Asn-173, Tyr-284, and Glu-367. A Mg(2+)-binding site is contributed by Asn-173.

Belongs to the transketolase family. DXPS subfamily. In terms of assembly, homodimer. Requires Mg(2+) as cofactor. Thiamine diphosphate is required as a cofactor.

The catalysed reaction is D-glyceraldehyde 3-phosphate + pyruvate + H(+) = 1-deoxy-D-xylulose 5-phosphate + CO2. It functions in the pathway metabolic intermediate biosynthesis; 1-deoxy-D-xylulose 5-phosphate biosynthesis; 1-deoxy-D-xylulose 5-phosphate from D-glyceraldehyde 3-phosphate and pyruvate: step 1/1. In terms of biological role, catalyzes the acyloin condensation reaction between C atoms 2 and 3 of pyruvate and glyceraldehyde 3-phosphate to yield 1-deoxy-D-xylulose-5-phosphate (DXP). The protein is 1-deoxy-D-xylulose-5-phosphate synthase of Bacillus cereus (strain G9842).